The primary structure comprises 365 residues: Alternative oxidase 2, mitochondrial (365 aa).

Residues 32-46 (TPPHSTTTTSPSSPA) are compositionally biased toward low complexity. Positions 32-52 (TPPHSTTTTSPSSPAFHQPNH) are disordered. Residues Glu-166, Glu-205, and His-208 each coordinate Fe cation. Residues 220 to 242 (WFTRSIIYVGQGVFTNVFFLLYL) form a helical membrane-spanning segment. Residues Glu-256, Glu-257, Glu-312, and His-315 each coordinate Fe cation. Residues 345–365 (QPNHGINVMRPTGWEKQDLQL) are disordered.

The protein belongs to the alternative oxidase family. Requires Fe cation as cofactor.

The protein resides in the mitochondrion inner membrane. Catalyzes cyanide-resistant oxygen consumption. May increase respiration when the cytochrome respiratory pathway is restricted, or in response to low temperatures. This Candida albicans (Yeast) protein is Alternative oxidase 2, mitochondrial (AOX2).